Consider the following 169-residue polypeptide: Crossover junction endodeoxyribonuclease RuvC (169 aa).

Catalysis depends on residues Asp15, Glu75, and Asp147. Mg(2+) contacts are provided by Asp15, Glu75, and Asp147.

Belongs to the RuvC family. In terms of assembly, homodimer which binds Holliday junction (HJ) DNA. The HJ becomes 2-fold symmetrical on binding to RuvC with unstacked arms; it has a different conformation from HJ DNA in complex with RuvA. In the full resolvosome a probable DNA-RuvA(4)-RuvB(12)-RuvC(2) complex forms which resolves the HJ. It depends on Mg(2+) as a cofactor.

The protein localises to the cytoplasm. It carries out the reaction Endonucleolytic cleavage at a junction such as a reciprocal single-stranded crossover between two homologous DNA duplexes (Holliday junction).. Its function is as follows. The RuvA-RuvB-RuvC complex processes Holliday junction (HJ) DNA during genetic recombination and DNA repair. Endonuclease that resolves HJ intermediates. Cleaves cruciform DNA by making single-stranded nicks across the HJ at symmetrical positions within the homologous arms, yielding a 5'-phosphate and a 3'-hydroxyl group; requires a central core of homology in the junction. The consensus cleavage sequence is 5'-(A/T)TT(C/G)-3'. Cleavage occurs on the 3'-side of the TT dinucleotide at the point of strand exchange. HJ branch migration catalyzed by RuvA-RuvB allows RuvC to scan DNA until it finds its consensus sequence, where it cleaves and resolves the cruciform DNA. The protein is Crossover junction endodeoxyribonuclease RuvC of Caulobacter sp. (strain K31).